A 269-amino-acid polypeptide reads, in one-letter code: MEHIARFFFGVSGNVIALFLFLSPVVTFWRIIRKRSTEDFSGVPYNMTLLNCLLSAWYGLPFVSPNNILVSTINGTGSVIEAIYVVIFLIFAVDRRARLRMLGLLSIVVSIFATVVLVSLLALHGNARKVFCGLAATIFSICMYASPLSIMRLVIKTKSVEYMPFLLSLAVFLCGTSWFIYGLLGRDPFIIIPNGCGSFLGLVQLILYFIYRKNKGPAVPAGKGEAAAAADVEDAKKVAAAVEMADATTTNKAAADTVVGDGKVVASQV.

Over 1-6 the chain is Extracellular; it reads MEHIAR. Residues 7–27 traverse the membrane as a helical segment; that stretch reads FFFGVSGNVIALFLFLSPVVT. Positions 8–96 constitute a MtN3/slv 1 domain; the sequence is FFGVSGNVIA…IFLIFAVDRR (89 aa). The Cytoplasmic portion of the chain corresponds to 28–42; that stretch reads FWRIIRKRSTEDFSG. Residues 43–63 form a helical membrane-spanning segment; the sequence is VPYNMTLLNCLLSAWYGLPFV. At 64-72 the chain is on the extracellular side; the sequence is SPNNILVST. A helical transmembrane segment spans residues 73–93; it reads INGTGSVIEAIYVVIFLIFAV. Topologically, residues 94–100 are cytoplasmic; the sequence is DRRARLR. Residues 101–121 form a helical membrane-spanning segment; sequence MLGLLSIVVSIFATVVLVSLL. Residues 122-129 lie on the Extracellular side of the membrane; sequence ALHGNARK. The chain crosses the membrane as a helical span at residues 130–150; the sequence is VFCGLAATIFSICMYASPLSI. Residues 132-215 enclose the MtN3/slv 2 domain; sequence CGLAATIFSI…ILYFIYRKNK (84 aa). Residues 151–164 are Cytoplasmic-facing; it reads MRLVIKTKSVEYMP. A helical transmembrane segment spans residues 165–185; it reads FLLSLAVFLCGTSWFIYGLLG. The Extracellular portion of the chain corresponds to 186 to 189; that stretch reads RDPF. A helical transmembrane segment spans residues 190-210; sequence IIIPNGCGSFLGLVQLILYFI. At 211–269 the chain is on the cytoplasmic side; it reads YRKNKGPAVPAGKGEAAAAADVEDAKKVAAAVEMADATTTNKAAADTVVGDGKVVASQV.

This sequence belongs to the SWEET sugar transporter family. Forms homooligomers and/or heterooligomers.

It localises to the cell membrane. Mediates both low-affinity uptake and efflux of sugar across the plasma membrane. The chain is Bidirectional sugar transporter SWEET1a from Sorghum bicolor (Sorghum).